The following is a 327-amino-acid chain: D-threonate 4-phosphate dehydrogenase (327 aa).

Substrate is bound by residues His-139 and Thr-140. Positions 169, 213, and 268 each coordinate a divalent metal cation. The substrate site is built by Lys-276, Asn-285, and Arg-294.

The protein belongs to the PdxA family. PdxA2 subfamily. As to quaternary structure, homodimer. The cofactor is a divalent metal cation.

The enzyme catalyses 4-O-phospho-D-threonate + NAD(+) = dihydroxyacetone phosphate + CO2 + NADH. Its function is as follows. Catalyzes the NAD-dependent oxidation and subsequent decarboxylation of D-threonate 4-phosphate to produce dihydroxyacetone phosphate (DHAP). Can also use 4-hydroxy-L-threonine 4-phosphate as substrate. The protein is D-threonate 4-phosphate dehydrogenase of Salmonella typhimurium (strain LT2 / SGSC1412 / ATCC 700720).